Consider the following 220-residue polypeptide: Urease accessory protein UreE (220 aa).

The interval 145 to 220 (EGGAYSAGGH…QIHKRRPDNL (76 aa)) is disordered. A compositionally biased stretch (basic and acidic residues) spans 156 to 177 (HGHDHGSHEHSAHDHGKHDHAP). Residues 178 to 188 (AKPATAATPAA) show a composition bias toward low complexity. Over residues 191–206 (HGPDCNHGHDHAHEAK) the composition is skewed to basic and acidic residues.

This sequence belongs to the UreE family.

The protein localises to the cytoplasm. Its function is as follows. Involved in urease metallocenter assembly. Binds nickel. Probably functions as a nickel donor during metallocenter assembly. The polypeptide is Urease accessory protein UreE (Polaromonas sp. (strain JS666 / ATCC BAA-500)).